A 557-amino-acid chain; its full sequence is Ribonuclease J 2 (557 aa).

Histidine 76, histidine 78, histidine 144, and glutamate 166 together coordinate Zn(2+). Position 366–370 (366–370 (HASSH)) interacts with substrate.

The protein belongs to the metallo-beta-lactamase superfamily. RNA-metabolizing metallo-beta-lactamase-like family. Bacterial RNase J subfamily. In terms of assembly, homodimer, may be a subunit of the RNA degradosome. It depends on Zn(2+) as a cofactor.

It localises to the cytoplasm. An RNase that has 5'-3' exonuclease and possibly endoonuclease activity. Involved in maturation of rRNA and in some organisms also mRNA maturation and/or decay. The polypeptide is Ribonuclease J 2 (Staphylococcus epidermidis (strain ATCC 35984 / DSM 28319 / BCRC 17069 / CCUG 31568 / BM 3577 / RP62A)).